Reading from the N-terminus, the 360-residue chain is Phospho-N-acetylmuramoyl-pentapeptide-transferase (360 aa).

Helical transmembrane passes span 25 to 45 (TGGAMVTGALFVFMFGPWIID), 71 to 91 (TPTMGGLMILSGLVVGTVLWA), 94 to 114 (LNPYVWIVLAVTLGFGFVGFY), 129 to 148 (SGRTRLAIETIIAAAACYAL), 168 to 188 (TAIYLGWFFVIFGGFIVVGAG), 199 to 219 (GLAIVPVMIAAASFGLVSYLA), 239 to 259 (LAVLCGALLGAGLGFLWFNAP), 263 to 283 (IFMGDTGSLALGGMLGTIAVA), 288 to 308 (FVLAVIGGLFVLEAVSVIVQV), and 337 to 357 (QIVIRFWIISVMLALAGLSTL).

This sequence belongs to the glycosyltransferase 4 family. MraY subfamily. The cofactor is Mg(2+).

The protein resides in the cell inner membrane. It catalyses the reaction UDP-N-acetyl-alpha-D-muramoyl-L-alanyl-gamma-D-glutamyl-meso-2,6-diaminopimeloyl-D-alanyl-D-alanine + di-trans,octa-cis-undecaprenyl phosphate = di-trans,octa-cis-undecaprenyl diphospho-N-acetyl-alpha-D-muramoyl-L-alanyl-D-glutamyl-meso-2,6-diaminopimeloyl-D-alanyl-D-alanine + UMP. Its pathway is cell wall biogenesis; peptidoglycan biosynthesis. Functionally, catalyzes the initial step of the lipid cycle reactions in the biosynthesis of the cell wall peptidoglycan: transfers peptidoglycan precursor phospho-MurNAc-pentapeptide from UDP-MurNAc-pentapeptide onto the lipid carrier undecaprenyl phosphate, yielding undecaprenyl-pyrophosphoryl-MurNAc-pentapeptide, known as lipid I. This is Phospho-N-acetylmuramoyl-pentapeptide-transferase from Rhodopseudomonas palustris (strain BisA53).